The chain runs to 156 residues: MSRRSTPKKRIIDSDPIYRSRLVTMLISHILKEGKKSLAQKIFYQAMKNIEEKTEKDPLKVLQQAVLNATPLVEVKARRLGGSTYQVPREVKAERGTALALRWLLSSARQRPGRNMVAKLTNEIVDAANETGNAIRKREETHRMAEANKAFSHYRF.

This sequence belongs to the universal ribosomal protein uS7 family. Part of the 30S ribosomal subunit.

It is found in the plastid. It localises to the chloroplast. In terms of biological role, one of the primary rRNA binding proteins, it binds directly to 16S rRNA where it nucleates assembly of the head domain of the 30S subunit. The chain is Small ribosomal subunit protein uS7c (rps7) from Mesostigma viride (Green alga).